We begin with the raw amino-acid sequence, 398 residues long: Arylacetamide deacetylase (398 aa).

Residues M1–I5 lie on the Cytoplasmic side of the membrane. Residues F6–I26 form a helical; Signal-anchor for type II membrane protein membrane-spanning segment. Topologically, residues E27–L398 are lumenal. A glycan (N-linked (GlcNAc...) asparagine) is linked at N77. An Involved in the stabilization of the negatively charged intermediate by the formation of the oxyanion hole motif is present at residues H110 to G112. A disulfide bridge connects residues C115 and C339. Residue S188 is part of the active site. 3 N-linked (GlcNAc...) asparagine glycosylation sites follow: N192, N281, and N324. Active-site residues include D342 and H372.

The protein belongs to the 'GDXG' lipolytic enzyme family. Highest levels in liver with lower levels in jejunum, kidney and testis.

It localises to the endoplasmic reticulum membrane. The protein localises to the microsome membrane. It catalyses the reaction a triacylglycerol + H2O = a diacylglycerol + a fatty acid + H(+). Its function is as follows. Displays cellular triglyceride lipase activity in liver, increases the levels of intracellular fatty acids derived from the hydrolysis of newly formed triglyceride stores and plays a role in very low-density lipoprotein assembly. Displays serine esterase activity in liver. Deacetylates a variety of arylacetamide substrates, including xenobiotic compounds and procarcinogens, converting them to the primary arylamide compounds and increasing their toxicity. The protein is Arylacetamide deacetylase (Aadac) of Rattus norvegicus (Rat).